A 125-amino-acid chain; its full sequence is Large ribosomal subunit protein bL12 (125 aa).

It belongs to the bacterial ribosomal protein bL12 family. Homodimer. Part of the ribosomal stalk of the 50S ribosomal subunit. Forms a multimeric L10(L12)X complex, where L10 forms an elongated spine to which 2 to 4 L12 dimers bind in a sequential fashion. Binds GTP-bound translation factors.

Its function is as follows. Forms part of the ribosomal stalk which helps the ribosome interact with GTP-bound translation factors. Is thus essential for accurate translation. In Bradyrhizobium sp. (strain BTAi1 / ATCC BAA-1182), this protein is Large ribosomal subunit protein bL12.